A 394-amino-acid polypeptide reads, in one-letter code: Phosphoglycerate kinase (394 aa).

Substrate contacts are provided by residues 21-23, Arg36, 59-62, Arg118, and Arg151; these read DFN and HLGR. Position 183 is a phosphoserine (Ser183). Lys201 contacts ATP. The residue at position 299 (Thr299) is a Phosphothreonine. Residues Glu323 and 350 to 353 each bind ATP; that span reads GGDS.

This sequence belongs to the phosphoglycerate kinase family. As to quaternary structure, monomer.

It localises to the cytoplasm. The enzyme catalyses (2R)-3-phosphoglycerate + ATP = (2R)-3-phospho-glyceroyl phosphate + ADP. Its pathway is carbohydrate degradation; glycolysis; pyruvate from D-glyceraldehyde 3-phosphate: step 2/5. This is Phosphoglycerate kinase from Halalkalibacterium halodurans (strain ATCC BAA-125 / DSM 18197 / FERM 7344 / JCM 9153 / C-125) (Bacillus halodurans).